Here is a 1325-residue protein sequence, read N- to C-terminus: Cellulose synthase 1 operon protein C (1325 aa).

A signal peptide spans 1–30 (MNRRYVFSLSAGLLASSCMGAIMPVPVARA). TPR repeat units lie at residues 50–83 (RQIL…APDA), 85–117 (DVLE…APGS), 292–325 (AGLA…NSHD), 326–359 (ADSL…DPKT), 406–439 (TGAT…DPNN), 558–591 (NDAA…KEDL), 702–735 (MGIA…DPEA), and 737–769 (SPKL…NPQD). Residues 838–886 (VEGSRSASGPAATEEDALAPPSSNPFRHHGYGRQTELGAPVTGGSYSME) form a disordered region.

It belongs to the AcsC/BcsC family.

It localises to the cell outer membrane. The protein operates within glycan metabolism; bacterial cellulose biosynthesis. Its function is as follows. Required for maximal bacterial cellulose synthesis. It may be involved in the formation of a membrane complex for extrusion of the cellulose product. The chain is Cellulose synthase 1 operon protein C (bcsCI) from Komagataeibacter xylinus (Gluconacetobacter xylinus).